We begin with the raw amino-acid sequence, 353 residues long: Photosystem II D2 protein (353 aa).

Thr2 is modified (N-acetylthreonine). Thr2 carries the post-translational modification Phosphothreonine. The chain crosses the membrane as a helical span at residues 41 to 61 (CAYFALGGWFTGTTFVTSWYT). Residue His118 participates in chlorophyll a binding. A helical transmembrane segment spans residues 125-141 (GFMLRQFELARSVQLRP). Pheophytin a is bound by residues Gln130 and Asn143. A helical membrane pass occupies residues 153 to 166 (VFVSVSLIYPLGQA). A chlorophyll a-binding site is contributed by His198. The chain crosses the membrane as a helical span at residues 208-228 (AALLCAIHGATVENTLFEDGD). The a plastoquinone site is built by His215 and Phe262. His215 serves as a coordination point for Fe cation. His269 contributes to the Fe cation binding site. Residues 279 to 295 (GLWMSAIGVVGLALNLR) form a helical membrane-spanning segment.

It belongs to the reaction center PufL/M/PsbA/D family. As to quaternary structure, PSII is composed of 1 copy each of membrane proteins PsbA, PsbB, PsbC, PsbD, PsbE, PsbF, PsbH, PsbI, PsbJ, PsbK, PsbL, PsbM, PsbT, PsbX, PsbY, PsbZ, Psb30/Ycf12, at least 3 peripheral proteins of the oxygen-evolving complex and a large number of cofactors. It forms dimeric complexes. It depends on The D1/D2 heterodimer binds P680, chlorophylls that are the primary electron donor of PSII, and subsequent electron acceptors. It shares a non-heme iron and each subunit binds pheophytin, quinone, additional chlorophylls, carotenoids and lipids. There is also a Cl(-1) ion associated with D1 and D2, which is required for oxygen evolution. The PSII complex binds additional chlorophylls, carotenoids and specific lipids. as a cofactor.

The protein resides in the plastid. The protein localises to the chloroplast thylakoid membrane. It carries out the reaction 2 a plastoquinone + 4 hnu + 2 H2O = 2 a plastoquinol + O2. Functionally, photosystem II (PSII) is a light-driven water:plastoquinone oxidoreductase that uses light energy to abstract electrons from H(2)O, generating O(2) and a proton gradient subsequently used for ATP formation. It consists of a core antenna complex that captures photons, and an electron transfer chain that converts photonic excitation into a charge separation. The D1/D2 (PsbA/PsbD) reaction center heterodimer binds P680, the primary electron donor of PSII as well as several subsequent electron acceptors. D2 is needed for assembly of a stable PSII complex. The protein is Photosystem II D2 protein of Angiopteris evecta (Mule's foot fern).